A 444-amino-acid polypeptide reads, in one-letter code: Tubulin beta chain (444 aa).

The GTP site is built by Gln-11, Glu-69, Ser-138, Gly-142, Thr-143, Gly-144, Asn-204, and Asn-226. Glu-69 is a Mg(2+) binding site.

Belongs to the tubulin family. Dimer of alpha and beta chains. A typical microtubule is a hollow water-filled tube with an outer diameter of 25 nm and an inner diameter of 15 nM. Alpha-beta heterodimers associate head-to-tail to form protofilaments running lengthwise along the microtubule wall with the beta-tubulin subunit facing the microtubule plus end conferring a structural polarity. Microtubules usually have 13 protofilaments but different protofilament numbers can be found in some organisms and specialized cells. Mg(2+) is required as a cofactor.

Its subcellular location is the cytoplasm. It localises to the cytoskeleton. In terms of biological role, tubulin is the major constituent of microtubules, a cylinder consisting of laterally associated linear protofilaments composed of alpha- and beta-tubulin heterodimers. Microtubules grow by the addition of GTP-tubulin dimers to the microtubule end, where a stabilizing cap forms. Below the cap, tubulin dimers are in GDP-bound state, owing to GTPase activity of alpha-tubulin. This chain is Tubulin beta chain, found in Euplotoides octocarinatus (Freshwater ciliate).